We begin with the raw amino-acid sequence, 387 residues long: 3-hydroxy-D-aspartate aldolase (387 aa).

At lysine 62 the chain carries N6-(pyridoxal phosphate)lysine. A pyridoxal 5'-phosphate-binding site is contributed by glutamine 85. Residues 199-228 form a disordered region; sequence HGQLRGPQGQAGRRHCPGERGRGRAGGRGL. Residues threonine 238, 256–257, and tyrosine 265 each bind pyridoxal 5'-phosphate; that span reads GS. The Mg(2+) site is built by histidine 355 and aspartate 357.

Belongs to the DSD1 family. As to quaternary structure, homodimer. Pyridoxal 5'-phosphate serves as cofactor. The cofactor is Mn(2+). It depends on Mg(2+) as a cofactor. Co(2+) is required as a cofactor.

The catalysed reaction is (3S)-3-hydroxy-D-aspartate = glyoxylate + glycine. The enzyme catalyses (3R)-3-hydroxy-D-aspartate = glyoxylate + glycine. In terms of biological role, catalyzes the condensation of glyoxylate and glycine into (2R,3S)-beta-hydroxyaspartate ((3S)-3-hydroxy-D-aspartate). Functions in glyoxylate assimilation via the beta-hydroxyaspartate cycle (BHAC). In vitro catalyzes the cleavage of both D-erythro- and D-threo-3-hydroxyaspartate to glycine and glyoxylate. Also acts on D-threonine, D-3-phenylserine and D-3-3,4-methylenedioxyphenylserine. The polypeptide is 3-hydroxy-D-aspartate aldolase (dhaa) (Paracoccus denitrificans).